Here is a 257-residue protein sequence, read N- to C-terminus: Imidazole glycerol phosphate synthase subunit HisF (257 aa).

Residues Asp11 and Asp130 contribute to the active site.

Belongs to the HisA/HisF family. In terms of assembly, heterodimer of HisH and HisF.

Its subcellular location is the cytoplasm. It catalyses the reaction 5-[(5-phospho-1-deoxy-D-ribulos-1-ylimino)methylamino]-1-(5-phospho-beta-D-ribosyl)imidazole-4-carboxamide + L-glutamine = D-erythro-1-(imidazol-4-yl)glycerol 3-phosphate + 5-amino-1-(5-phospho-beta-D-ribosyl)imidazole-4-carboxamide + L-glutamate + H(+). Its pathway is amino-acid biosynthesis; L-histidine biosynthesis; L-histidine from 5-phospho-alpha-D-ribose 1-diphosphate: step 5/9. Functionally, IGPS catalyzes the conversion of PRFAR and glutamine to IGP, AICAR and glutamate. The HisF subunit catalyzes the cyclization activity that produces IGP and AICAR from PRFAR using the ammonia provided by the HisH subunit. The protein is Imidazole glycerol phosphate synthase subunit HisF of Shewanella sp. (strain ANA-3).